The following is a 1037-amino-acid chain: Probable inorganic carbon transporter subunit DabA 2 (1037 aa).

Zn(2+) is bound by residues cysteine 460, aspartate 462, histidine 719, and cysteine 734.

This sequence belongs to the inorganic carbon transporter (TC 9.A.2) DabA family. In terms of assembly, forms a complex with DabB. Requires Zn(2+) as cofactor.

It localises to the cell inner membrane. Its function is as follows. Part of an energy-coupled inorganic carbon pump. The polypeptide is Probable inorganic carbon transporter subunit DabA 2 (Nitrobacter winogradskyi (strain ATCC 25391 / DSM 10237 / CIP 104748 / NCIMB 11846 / Nb-255)).